The primary structure comprises 144 residues: Maximins 3/H5 (144 aa).

Residues 1–18 (MNFKYIFAVSFLIASAYA) form the signal peptide. 2 propeptides span residues 19–43 (RSVQ…REIR) and 74–123 (TAEE…KEKR). Position 143 is a leucine amide (L143).

It belongs to the bombinin family. In terms of tissue distribution, expressed by the skin glands.

The protein resides in the secreted. Its function is as follows. Maximin-3 shows antibacterial activity against both Gram-positive and Gram-negative bacteria. It also shows antimicrobial activity against the fungus C.albicans, but not against A.flavus nor P.uticale. It has little hemolytic activity. It possess a significant cytotoxicity against tumor cell lines. It possess a significant anti-HIV activity. It shows high spermicidal activity. Functionally, maximin-H5 shows antibacterial activity only against the Gram-positive bacteria S.aureus. The other bacterial and fungal strains tested were resistant to it. The presence of metal ions, like Zn(2+) and Mg(2+), did not increase its antimicrobial potency. Does not show hemolytic activity (in a concentration up to 80 uM). This chain is Maximins 3/H5, found in Bombina maxima (Giant fire-bellied toad).